The following is a 448-amino-acid chain: Phosphoglucosamine mutase (448 aa).

The active-site Phosphoserine intermediate is Ser-101. Residues Ser-101, Asp-242, Asp-244, and Asp-246 each coordinate Mg(2+). Phosphoserine is present on Ser-101.

This sequence belongs to the phosphohexose mutase family. Mg(2+) is required as a cofactor. Activated by phosphorylation.

It carries out the reaction alpha-D-glucosamine 1-phosphate = D-glucosamine 6-phosphate. Its function is as follows. Catalyzes the conversion of glucosamine-6-phosphate to glucosamine-1-phosphate. In Nitrobacter winogradskyi (strain ATCC 25391 / DSM 10237 / CIP 104748 / NCIMB 11846 / Nb-255), this protein is Phosphoglucosamine mutase.